Here is a 589-residue protein sequence, read N- to C-terminus: Cyclohexane-1,2-dione hydrolase (589 aa).

Glu-52 provides a ligand contact to thiamine diphosphate. Residues 400–480 (NHTLPMFGGA…VITMVFTNES (81 aa)) form a thiamine pyrophosphate binding region. Mg(2+) contacts are provided by Asp-451 and Asn-478.

It belongs to the TPP enzyme family. Homodimer. Mg(2+) is required as a cofactor. The cofactor is thiamine diphosphate. It depends on FAD as a cofactor.

The enzyme catalyses cyclohexan-1,2-dione + H2O = 6-oxohexanoate + H(+). In terms of biological role, catalyzes the ring-opening cleavage of the alicyclic alcohol cyclohexane-1,2-dione. In Azoarcus sp, this protein is Cyclohexane-1,2-dione hydrolase.